The primary structure comprises 316 residues: Alpha- and gamma-adaptin-binding protein p34 (316 aa).

Residues 198 to 232 (ASAESCHSEQQEPSPTAERTESLPGHHSGACGSAG) are disordered. Over residues 222 to 232 (GHHSGACGSAG) the composition is skewed to low complexity. Residues Ser-311 and Ser-312 each carry the phosphoserine modification.

Associated with AP-1 and AP-2 complexes.

Its subcellular location is the cytoplasm. It is found in the cytosol. In terms of biological role, may be involved in endocytic recycling of growth factor receptors such as EGFR. The sequence is that of Alpha- and gamma-adaptin-binding protein p34 (Aagab) from Mus musculus (Mouse).